Here is a 498-residue protein sequence, read N- to C-terminus: Glycerol kinase (498 aa).

Residue threonine 12 coordinates ADP. Threonine 12, threonine 13, and serine 14 together coordinate ATP. Threonine 12 serves as a coordination point for sn-glycerol 3-phosphate. An ADP-binding site is contributed by arginine 16. Sn-glycerol 3-phosphate is bound by residues arginine 82, glutamate 83, tyrosine 134, and aspartate 244. The glycerol site is built by arginine 82, glutamate 83, tyrosine 134, aspartate 244, and glutamine 245. 2 residues coordinate ADP: threonine 266 and glycine 310. Residues threonine 266, glycine 310, glutamine 314, and glycine 411 each contribute to the ATP site. Residues glycine 411 and asparagine 415 each coordinate ADP.

Belongs to the FGGY kinase family.

The enzyme catalyses glycerol + ATP = sn-glycerol 3-phosphate + ADP + H(+). It participates in polyol metabolism; glycerol degradation via glycerol kinase pathway; sn-glycerol 3-phosphate from glycerol: step 1/1. Its activity is regulated as follows. Inhibited by fructose 1,6-bisphosphate (FBP). Its function is as follows. Key enzyme in the regulation of glycerol uptake and metabolism. Catalyzes the phosphorylation of glycerol to yield sn-glycerol 3-phosphate. The sequence is that of Glycerol kinase from Chloroflexus aggregans (strain MD-66 / DSM 9485).